The chain runs to 458 residues: ATP synthase subunit beta (458 aa).

148 to 155 (GGAGVGKT) is a binding site for ATP.

This sequence belongs to the ATPase alpha/beta chains family. As to quaternary structure, F-type ATPases have 2 components, CF(1) - the catalytic core - and CF(0) - the membrane proton channel. CF(1) has five subunits: alpha(3), beta(3), gamma(1), delta(1), epsilon(1). CF(0) has three main subunits: a(1), b(2) and c(9-12). The alpha and beta chains form an alternating ring which encloses part of the gamma chain. CF(1) is attached to CF(0) by a central stalk formed by the gamma and epsilon chains, while a peripheral stalk is formed by the delta and b chains.

It localises to the cell inner membrane. The enzyme catalyses ATP + H2O + 4 H(+)(in) = ADP + phosphate + 5 H(+)(out). Its function is as follows. Produces ATP from ADP in the presence of a proton gradient across the membrane. The catalytic sites are hosted primarily by the beta subunits. The polypeptide is ATP synthase subunit beta (Pseudomonas putida (strain W619)).